Here is a 330-residue protein sequence, read N- to C-terminus: GTPase Obg (330 aa).

Residues 1 to 159 (MNFIDEVKIY…MWIHLSLKLL (159 aa)) enclose the Obg domain. Residues 160–327 (SDVGLVGLPN…IVKLALKIIK (168 aa)) enclose the OBG-type G domain. Residues 166-173 (GLPNAGKS), 191-195 (FTTLV), 212-215 (DIPG), 279-282 (NKCD), and 308-310 (STY) each bind GTP. 2 residues coordinate Mg(2+): S173 and T193.

Belongs to the TRAFAC class OBG-HflX-like GTPase superfamily. OBG GTPase family. In terms of assembly, monomer. Mg(2+) serves as cofactor.

It is found in the cytoplasm. An essential GTPase which binds GTP, GDP and possibly (p)ppGpp with moderate affinity, with high nucleotide exchange rates and a fairly low GTP hydrolysis rate. Plays a role in control of the cell cycle, stress response, ribosome biogenesis and in those bacteria that undergo differentiation, in morphogenesis control. This chain is GTPase Obg, found in Rickettsia akari (strain Hartford).